A 480-amino-acid polypeptide reads, in one-letter code: MKKNALWLLCILVLPAIACGRKPEKKVTISSSGRKEDDLVTGLPGQPPVNFKHYAGYVNLGPEQKQKALFYWFFEAQQNSSRRPLVLWLNGGPGCSSIAYGAAQELGPFLVHDNGGKLTYNHFSWNKEANMLFLEAPVGVGFSYTNNSMDLQKLGDEVTASDSLAFLINWFMKFPEFRSSEFYISGESYAGHYVPQLAEVIYDRNKKVTKDSSINLKGFMIGNAVINEATDMAGLVDYAWSHAIISDEVHTSIHGSCSFEEDTTNKTEQCYNNFKGFMDAYNDIDIYSIYTPVCLSSLLSSSPRKPKIVVSPRLLTFDDLWDKFPAGYDPCTESYAENYFNRKDVQVALHANVTNLPYPYSPCSGVIKRWSDAPSTMIPIIQKLLTGGLRIWIYSGDTDGRVPVTSTRYSIKKMGLKVESPWRSWFHKSQVAGWVETYAGGLNFVTVRGAGHQVPALAPAQSLTLFSHFISSVPLPSKRF.

The signal sequence occupies residues 1–20; it reads MKKNALWLLCILVLPAIACG. N-linked (GlcNAc...) asparagine glycosylation is found at N79 and N146. 3 disulfides stabilise this stretch: C95/C363, C257/C270, and C294/C331. S188 is a catalytic residue. Residue N265 is glycosylated (N-linked (GlcNAc...) asparagine). N352 carries N-linked (GlcNAc...) asparagine glycosylation. Residues D399 and H452 contribute to the active site.

It belongs to the peptidase S10 family. In terms of tissue distribution, expressed in seedlings, flowers and siliques.

Its subcellular location is the secreted. Functionally, probable carboxypeptidase. In Arabidopsis thaliana (Mouse-ear cress), this protein is Serine carboxypeptidase-like 35 (SCPL35).